Consider the following 378-residue polypeptide: Mannitol-1-phosphate 5-dehydrogenase (378 aa).

4 to 15 (SVHFGAGNIGRG) lines the NAD(+) pocket.

Belongs to the mannitol dehydrogenase family.

It catalyses the reaction D-mannitol 1-phosphate + NAD(+) = beta-D-fructose 6-phosphate + NADH + H(+). In Streptococcus pneumoniae (strain JJA), this protein is Mannitol-1-phosphate 5-dehydrogenase.